Reading from the N-terminus, the 255-residue chain is Acetylglutamate kinase (255 aa).

Residues 40 to 41 (GG), arginine 62, and asparagine 153 contribute to the substrate site.

It belongs to the acetylglutamate kinase family. ArgB subfamily.

It localises to the cytoplasm. It carries out the reaction N-acetyl-L-glutamate + ATP = N-acetyl-L-glutamyl 5-phosphate + ADP. It participates in amino-acid biosynthesis; L-arginine biosynthesis; N(2)-acetyl-L-ornithine from L-glutamate: step 2/4. In terms of biological role, catalyzes the ATP-dependent phosphorylation of N-acetyl-L-glutamate. The protein is Acetylglutamate kinase of Bacillus anthracis (strain CDC 684 / NRRL 3495).